A 128-amino-acid chain; its full sequence is SH2 domain-containing protein 1A (128 aa).

One can recognise an SH2 domain in the interval 6-102; that stretch reads VYHGKISRET…GIVIPLQYPV (97 aa). The interaction with FYN SH3 domain stretch occupies residues 67–92; that stretch reads ETAPGVHKRFFRKIKNLISAFQKPDQ. Lys-89 is subject to N6-acetyllysine. The disordered stretch occupies residues 104–128; sequence KKPSARSTQGATGRRDDPDVFLKTP. The span at 116-128 shows a compositional bias: basic and acidic residues; sequence GRRDDPDVFLKTP.

As to quaternary structure, interacts with CD84, CD244, LY9, SLAMF1 and FYN. Interacts with NTRK1, NTRK2 and NTRK3.

The protein localises to the cytoplasm. Its function is as follows. Cytoplasmic adapter regulating receptors of the signaling lymphocytic activation molecule (SLAM) family such as SLAMF1, CD244, LY9, CD84, SLAMF6 and SLAMF7. In SLAM signaling seems to cooperate with SH2D1B/EAT-2. Initially it has been proposed that association with SLAMF1 prevents SLAMF1 binding to inhibitory effectors including INPP5D/SHIP1 and PTPN11/SHP-2. However, by simultaneous interactions, recruits FYN which subsequently phosphorylates and activates SLAMF1. Positively regulates CD244/2B4- and CD84-mediated natural killer (NK) cell functions. Can also promote CD48-, SLAMF6 -, LY9-, and SLAMF7-mediated NK cell activation. In the context of NK cell-mediated cytotoxicity enhances conjugate formation with target cells. May also regulate the activity of the neurotrophin receptors NTRK1, NTRK2 and NTRK3. This chain is SH2 domain-containing protein 1A (SH2D1A), found in Bos taurus (Bovine).